The following is a 334-amino-acid chain: Protein-methionine-sulfoxide reductase catalytic subunit MsrP (334 aa).

A signal peptide (tat-type signal) is located at residues 1–44 (MKKVSRLTEADVTAESAFFMQRRQVLKALGITTAALSLPTAAHA). Residues N88, 91–92 (YE), C146, T181, N233, R238, and 249–251 (GIK) contribute to the Mo-molybdopterin site.

This sequence belongs to the MsrP family. In terms of assembly, heterodimer of a catalytic subunit (MsrP) and a heme-binding subunit (MsrQ). The cofactor is Mo-molybdopterin. In terms of processing, predicted to be exported by the Tat system. The position of the signal peptide cleavage has not been experimentally proven.

It localises to the periplasm. The enzyme catalyses L-methionyl-[protein] + a quinone + H2O = L-methionyl-(S)-S-oxide-[protein] + a quinol. It carries out the reaction L-methionyl-[protein] + a quinone + H2O = L-methionyl-(R)-S-oxide-[protein] + a quinol. Its function is as follows. Part of the MsrPQ system that repairs oxidized periplasmic proteins containing methionine sulfoxide residues (Met-O), using respiratory chain electrons. Thus protects these proteins from oxidative-stress damage caused by reactive species of oxygen and chlorine generated by the host defense mechanisms. MsrPQ is essential for the maintenance of envelope integrity under bleach stress, rescuing a wide series of structurally unrelated periplasmic proteins from methionine oxidation. The catalytic subunit MsrP is non-stereospecific, being able to reduce both (R-) and (S-) diastereoisomers of methionine sulfoxide. The protein is Protein-methionine-sulfoxide reductase catalytic subunit MsrP of Cronobacter sakazakii (strain ATCC BAA-894) (Enterobacter sakazakii).